The sequence spans 369 residues: Phospho-N-acetylmuramoyl-pentapeptide-transferase (369 aa).

10 helical membrane-spanning segments follow: residues 13–33 (ISGIGLASSLAAGLGIAALTL), 49–69 (LPLLLCTIASAIAGYFVVPLL), 95–115 (MGGIFFIPVAVVGACVLSNFA), 119–139 (LAVSALTLSYGLIGWIDDWQI), 154–174 (LALQIGFAAAFCLWLMFNQPA), 183–203 (WVSFALPLGFLFWPLAGFVLV), 215–235 (IDGLAGGTVAIALLALGAIVA), 237–257 (TSPALMVFCAALSGSCLGFLA), 281–301 (AVALLTNSLVALFILSGIFFV), and 346–366 (VVSSFYVIAAILAAICLAIAS).

The protein belongs to the glycosyltransferase 4 family. MraY subfamily. Requires Mg(2+) as cofactor.

It localises to the cell inner membrane. It catalyses the reaction UDP-N-acetyl-alpha-D-muramoyl-L-alanyl-gamma-D-glutamyl-meso-2,6-diaminopimeloyl-D-alanyl-D-alanine + di-trans,octa-cis-undecaprenyl phosphate = di-trans,octa-cis-undecaprenyl diphospho-N-acetyl-alpha-D-muramoyl-L-alanyl-D-glutamyl-meso-2,6-diaminopimeloyl-D-alanyl-D-alanine + UMP. It participates in cell wall biogenesis; peptidoglycan biosynthesis. Catalyzes the initial step of the lipid cycle reactions in the biosynthesis of the cell wall peptidoglycan: transfers peptidoglycan precursor phospho-MurNAc-pentapeptide from UDP-MurNAc-pentapeptide onto the lipid carrier undecaprenyl phosphate, yielding undecaprenyl-pyrophosphoryl-MurNAc-pentapeptide, known as lipid I. This is Phospho-N-acetylmuramoyl-pentapeptide-transferase from Nostoc sp. (strain PCC 7120 / SAG 25.82 / UTEX 2576).